We begin with the raw amino-acid sequence, 164 residues long: Protein phosphatase 1 regulatory subunit 14C (164 aa).

The span at 1–19 shows a compositional bias: gly residues; the sequence is MSVVTGGGEAAGGGGGGGA. Residues 1 to 70 form a disordered region; the sequence is MSVVTGGGEA…QQQRRHQQGK (70 aa). At serine 2 the chain carries N-acetylserine. At serine 25 the chain carries Phosphoserine. An Omega-N-methylarginine modification is found at arginine 27. The residue at position 33 (serine 33) is a Phosphoserine. The segment covering 50-62 has biased composition (low complexity); sequence VTTVAAAGQVQQQ. Threonine 72 is modified (phosphothreonine; by ILK1).

This sequence belongs to the PP1 inhibitor family. In terms of processing, the main inhibitory site appears to be Thr-72. Has over 600-fold higher inhibitory activity when phosphorylated, creating a molecular switch for regulating the phosphorylation status of PPP1CA substrates and smooth muscle contraction. In terms of tissue distribution, detected in heart, muscle, spinal cord, hippocampus, hypothalamus, thalamus, midbrain, brain stem, cerebellum, brain cortex and olfactory bulb.

It is found in the endomembrane system. Its function is as follows. Inhibitor of the PP1 regulatory subunit PPP1CA. This is Protein phosphatase 1 regulatory subunit 14C (Ppp1r14c) from Mus musculus (Mouse).